Consider the following 718-residue polypeptide: Protein Smaug homolog 1 (718 aa).

Position 168 is a phosphoserine (serine 168). Disordered stretches follow at residues 278–323 (ARGP…EEGS), 416–474 (KAYS…LQPH), and 572–601 (NRGF…QYQI). In terms of domain architecture, SAM spans 323–391 (SGMKDVPAWL…ERQNLLKSLE (69 aa)). Serine 420 carries the post-translational modification Phosphoserine. Threonine 424 carries the post-translational modification Phosphothreonine. Residues 453 to 466 (GAAATGATATPSAG) show a composition bias toward low complexity. Position 573 is an omega-N-methylarginine (arginine 573). Residue serine 580 is modified to Phosphoserine.

Belongs to the SMAUG family.

Its subcellular location is the cytoplasm. It localises to the cell projection. The protein resides in the dendrite. The protein localises to the synapse. It is found in the synaptosome. In terms of biological role, acts as a translational repressor of SRE-containing messengers. The chain is Protein Smaug homolog 1 (SAMD4A) from Homo sapiens (Human).